A 163-amino-acid polypeptide reads, in one-letter code: Cyclic pyranopterin monophosphate synthase (163 aa).

Substrate contacts are provided by residues 79 to 81 and 118 to 119; these read LCH and ME. Asp133 is an active-site residue.

It belongs to the MoaC family. Homohexamer; trimer of dimers.

It carries out the reaction (8S)-3',8-cyclo-7,8-dihydroguanosine 5'-triphosphate = cyclic pyranopterin phosphate + diphosphate. It functions in the pathway cofactor biosynthesis; molybdopterin biosynthesis. Its function is as follows. Catalyzes the conversion of (8S)-3',8-cyclo-7,8-dihydroguanosine 5'-triphosphate to cyclic pyranopterin monophosphate (cPMP). The chain is Cyclic pyranopterin monophosphate synthase from Nocardioides sp. (strain ATCC BAA-499 / JS614).